A 578-amino-acid polypeptide reads, in one-letter code: Proline--tRNA ligase (578 aa).

The protein belongs to the class-II aminoacyl-tRNA synthetase family. ProS type 1 subfamily. As to quaternary structure, homodimer.

It localises to the cytoplasm. It catalyses the reaction tRNA(Pro) + L-proline + ATP = L-prolyl-tRNA(Pro) + AMP + diphosphate. Functionally, catalyzes the attachment of proline to tRNA(Pro) in a two-step reaction: proline is first activated by ATP to form Pro-AMP and then transferred to the acceptor end of tRNA(Pro). As ProRS can inadvertently accommodate and process non-cognate amino acids such as alanine and cysteine, to avoid such errors it has two additional distinct editing activities against alanine. One activity is designated as 'pretransfer' editing and involves the tRNA(Pro)-independent hydrolysis of activated Ala-AMP. The other activity is designated 'posttransfer' editing and involves deacylation of mischarged Ala-tRNA(Pro). The misacylated Cys-tRNA(Pro) is not edited by ProRS. In Burkholderia ambifaria (strain MC40-6), this protein is Proline--tRNA ligase.